The sequence spans 380 residues: Ceramide synthase 2 (380 aa).

The Lumenal portion of the chain corresponds to 1–40; sequence MLQTLYDYFWWERLWLPVNLTWADLEDRDGRVYAKASDLY. A glycan (N-linked (GlcNAc...) asparagine) is linked at Asn-19. Residues 41 to 61 form a helical membrane-spanning segment; that stretch reads ITLPLALLFLIVRYFFELYVA. The segment at 67–128 is homeobox-like; it reads LLNIKEKTRL…RRRRNQDRPS (62 aa). The TLC domain occupies 131 to 332; the sequence is KKFREASWRF…ILRMAHKFIT (202 aa). 4 helical membrane passes run 140–160, 181–201, 209–229, and 264–284; these read FTFY…KPWF, WYYM…ASDV, QIIH…ANYI, and IFIV…PFWI. The short motif at 291 to 300 is the Last loop motif element; it reads YPLELYPAFF. A helical transmembrane segment spans residues 304–324; that stretch reads FFNSMMGVLQLLHIFWAYLIL. Over 325–380 the chain is Cytoplasmic; that stretch reads RMAHKFITGKLVEDERSDREETESSEGEEAAAGGGAKSRPLANGHPILNNNHRKND. Residues 338–380 are disordered; it reads DERSDREETESSEGEEAAAGGGAKSRPLANGHPILNNNHRKND. Phosphoserine is present on Ser-341. The segment covering 344–353 has biased composition (acidic residues); sequence EETESSEGEE. Phosphothreonine is present on Thr-346. Phosphoserine occurs at positions 348 and 349.

As to quaternary structure, interacts with ATP6V0C, ASGR1, ASGR2 and SLC22A1/OCT1. Interacts with ELOV1, HSD17B12 and TECR. Interacts with NDUFS2. Interacts with PAQR4; the interaction regulates the stability and activity of CERS2 and is inhibited in presence of ceramides. Post-translationally, acetylated. Deacetylation by SIRT3 increases enzyme activity and promotes mitochondrial ceramide accumulation. In terms of processing, phosphorylated at the C-terminus by CK2, leading to increase the ceramide synthase activity. As to expression, expressed in kidney, liver, brain, heart, placenta and lung.

Its subcellular location is the endoplasmic reticulum membrane. The catalysed reaction is a very long-chain fatty acyl-CoA + a sphingoid base = an N-(very-long-chain fatty acyl)-sphingoid base + CoA + H(+). It catalyses the reaction docosanoyl-CoA + sphinganine = N-docosanoylsphinganine + CoA + H(+). It carries out the reaction tetracosanoyl-CoA + sphinganine = N-tetracosanoylsphinganine + CoA + H(+). The enzyme catalyses hexacosanoyl-CoA + sphinganine = N-hexacosanoylsphinganine + CoA + H(+). The catalysed reaction is (15Z)-tetracosenoyl-CoA + sphinganine = N-(15Z-tetracosenoyl)-sphinganine + CoA + H(+). It catalyses the reaction 2-hydroxytetracosanoyl-CoA + sphinganine = N-(2-hydroxytetracosanoyl)-sphinganine + CoA + H(+). It carries out the reaction 2-hydroxydocosanoyl-CoA + sphinganine = N-(2-hydroxydocosanoyl)-sphinganine + CoA + H(+). The enzyme catalyses 2-hydroxytetracosenoyl-CoA + sphinganine = N-(2-hydroxytetracosenoyl)-sphinganine + CoA + H(+). The catalysed reaction is tetracosenoyl-CoA + sphinganine = an N-tetracosenoylsphinganine + CoA + H(+). It catalyses the reaction hexacosenoyl-CoA + sphinganine = N-hexacosenoylsphinganine + CoA + H(+). It carries out the reaction tetracosanoyl-CoA + sphing-4-enine = N-tetracosanoyl-sphing-4-enine + CoA + H(+). The enzyme catalyses tetracosenoyl-CoA + sphing-4-enine = N-(tetracosenoyl)-sphing-4-enine + CoA + H(+). The catalysed reaction is heptadecasphing-4-enine + tetracosanoyl-CoA = N-tetracosanoyl-heptadecasphing-4-enine + CoA + H(+). It catalyses the reaction a fatty acyl-CoA + sphing-4-enine = an N-acylsphing-4-enine + CoA + H(+). It carries out the reaction sphing-4-enine + hexadecanoyl-CoA = N-hexadecanoylsphing-4-enine + CoA + H(+). The enzyme catalyses sphing-4-enine + octadecanoyl-CoA = N-octadecanoylsphing-4-enine + CoA + H(+). The catalysed reaction is eicosanoyl-CoA + sphing-4-enine = N-eicosanoyl-sphing-4-enine + CoA + H(+). It catalyses the reaction sphinganine + hexadecanoyl-CoA = N-hexadecanoylsphinganine + CoA + H(+). It carries out the reaction sphinganine + octadecanoyl-CoA = N-(octadecanoyl)-sphinganine + CoA + H(+). The enzyme catalyses sphinganine + (9Z)-octadecenoyl-CoA = N-(9Z-octadecenoyl)-sphinganine + CoA + H(+). The catalysed reaction is eicosanoyl-CoA + sphinganine = N-eicosanoylsphinganine + CoA + H(+). The protein operates within lipid metabolism; sphingolipid metabolism. Its activity is regulated as follows. Ceramide synthase activity is inhibited by sphingosine-1-phosphate. Ceramide synthase that catalyzes the transfer of the acyl chain from acyl-CoA to a sphingoid base, with high selectivity toward very-long-chain fatty acyl-CoA (chain length C22-C27). N-acylates sphinganine and sphingosine bases to form dihydroceramides and ceramides in de novo synthesis and salvage pathways, respectively. Plays a non-redundant role in the synthesis of ceramides with very-long-chain fatty acids in kidney, liver and brain. Regulates the abundance of myelin-specific sphingolipids galactosylceramide and sulfatide that affects myelin sheath architecture and motor neuron functions. This chain is Ceramide synthase 2, found in Homo sapiens (Human).